A 1081-amino-acid polypeptide reads, in one-letter code: Probable cellulose synthase A catalytic subunit 8 [UDP-forming] (1081 aa).

At Met1 to Met277 the chain is on the cytoplasmic side. Residues Cys19, Cys22, Cys38, Cys41, Cys46, Cys49, Cys61, and Cys64 each contribute to the Zn(2+) site. The segment at Cys19–Lys65 adopts an RING-type; degenerate zinc-finger fold. A disordered region spans residues Lys72 to Tyr148. Over residues Glu81 to Ser91 the composition is skewed to acidic residues. Over residues Gln103–Arg112 the composition is skewed to basic and acidic residues. A helical transmembrane segment spans residues Val278–Val298. Over Arg299–Asn300 the chain is Extracellular. Residues Ala301 to Leu321 form a helical membrane-spanning segment. Topologically, residues Asp322–Ser864 are cytoplasmic. Positions 360, 366, 367, and 396 each coordinate UDP-alpha-D-glucose. Residue Asp396 is part of the active site. The stretch at Val450–Val477 forms a coiled coil. Lys537 contacts UDP-alpha-D-glucose. Mn(2+) contacts are provided by Lys538 and Asp562. The disordered stretch occupies residues Ser660–His684. Positions Gly664–Asn682 are enriched in basic residues. Asp781 is a catalytic residue. The helical transmembrane segment at Ile865–Ile885 threads the bilayer. At Pro886–Asn890 the chain is on the extracellular side. The chain crosses the membrane as a helical span at residues Phe891–Met911. At Arg912 to Gln926 the chain is on the cytoplasmic side. The chain crosses the membrane as a helical span at residues Phe927–Val947. The Extracellular segment spans residues Leu948–Thr977. Asn954 carries N-linked (GlcNAc...) asparagine glycosylation. Residues Thr978 to Ile998 traverse the membrane as a helical segment. At Ser999–Trp1009 the chain is on the cytoplasmic side. The helical transmembrane segment at Gly1010–Leu1030 threads the bilayer. Residues Lys1031–Arg1039 are Extracellular-facing. A helical membrane pass occupies residues Thr1040–Val1060. At Arg1061–Cys1081 the chain is on the cytoplasmic side.

It belongs to the glycosyltransferase 2 family. Plant cellulose synthase subfamily. Mn(2+) serves as cofactor. Zn(2+) is required as a cofactor.

The protein localises to the cell membrane. It carries out the reaction [(1-&gt;4)-beta-D-glucosyl](n) + UDP-alpha-D-glucose = [(1-&gt;4)-beta-D-glucosyl](n+1) + UDP + H(+). It functions in the pathway glycan metabolism; plant cellulose biosynthesis. In terms of biological role, probable catalytic subunit of cellulose synthase terminal complexes ('rosettes'), required for beta-1,4-glucan microfibril crystallization, a major mechanism of the cell wall formation. The sequence is that of Probable cellulose synthase A catalytic subunit 8 [UDP-forming] (CESA8) from Oryza sativa subsp. japonica (Rice).